A 359-amino-acid polypeptide reads, in one-letter code: Protein disulfide-isomerase tigA (359 aa).

Residues 1 to 19 (MVRLSNLVSCLGLASAVTA) form the signal peptide. Thioredoxin domains are found at residues 20–129 (AVVD…EKTG) and 131–250 (KPRG…EKTG). Active-site nucleophile residues include C49, C52, C169, and C172. 2 disulfides stabilise this stretch: C49–C52 and C169–C172. The Prevents secretion from ER signature appears at 356–359 (KDEL).

It belongs to the protein disulfide isomerase family.

It is found in the endoplasmic reticulum lumen. It carries out the reaction Catalyzes the rearrangement of -S-S- bonds in proteins.. This Aspergillus niger protein is Protein disulfide-isomerase tigA (tigA).